The sequence spans 182 residues: Large ribosomal subunit protein uL10 (182 aa).

This sequence belongs to the universal ribosomal protein uL10 family. Part of the ribosomal stalk of the 50S ribosomal subunit. The N-terminus interacts with L11 and the large rRNA to form the base of the stalk. The C-terminus forms an elongated spine to which L12 dimers bind in a sequential fashion forming a multimeric L10(L12)X complex.

Its function is as follows. Forms part of the ribosomal stalk, playing a central role in the interaction of the ribosome with GTP-bound translation factors. In Koribacter versatilis (strain Ellin345), this protein is Large ribosomal subunit protein uL10.